Consider the following 355-residue polypeptide: MEEVAVKKRGRPSKASVGGKSSTAAVAAISPGIKKRGRPAKNKGSSGGGGQRGRPPKASKIQNDEDPEDEGEEDGDGDGSGAELANNSSPSPTKGRGRPKSSGGAGSGSGDSVKTPGSAKKRKAGRPKKHQPSDSENEDDQDEDDDGNSSIEERRPVGRPSAGSVNLNISRTGRGLGRPKKRAVESNGDGEPQVPKKRGRPPQNKSGSGGSTGYVPTGRPRGRPKANAAPVEKHEDNDDDQDDENSGEEEHSSPEKTVVAPKKRGRPSLAAGKVSKEETTKPRSRPAKNIDDDADDADSADQGQHNSKKESNDEDRAVDGTPTKGDGLKWNSDGENDANDGYVSDNYNDSESVAA.

Met-1 carries the N-acetylmethionine modification. A disordered region spans residues Met-1–Ala-355. Positions Lys-7–Lys-14 form a DNA-binding region, a.T hook 1. Ser-30 carries the post-translational modification Phosphoserine. DNA-binding regions (a.T hook) lie at residues Lys-34–Lys-41 and Lys-60–Pro-67. The segment covering Asp-64–Gly-77 has biased composition (acidic residues). A phosphoserine mark is found at Ser-80, Ser-88, and Ser-89. A DNA-binding region (a.T hook 4) is located at residues Lys-94–Ser-101. Phosphoserine is present on residues Ser-107, Ser-109, and Ser-112. Residue Thr-115 is modified to Phosphothreonine. Position 118 is a phosphoserine (Ser-118). The segment covering Ala-119–His-130 has biased composition (basic residues). Positions Arg-122–Lys-129 form a DNA-binding region, a.T hook 5. Ser-133 and Ser-135 each carry phosphoserine; by CK2. The span at Ser-135–Gly-147 shows a compositional bias: acidic residues. Phosphoserine occurs at positions 149, 150, 161, 164, and 170. Residues Arg-155–Ala-162 constitute a DNA-binding region (a.T hook 6). Residues Arg-174–Lys-181 constitute a DNA-binding region (a.T hook 7). Residue Ser-186 is modified to Phosphoserine; by CK2. Positions Lys-196–Gln-203 form a DNA-binding region, a.T hook 8. The residue at position 208 (Ser-208) is a Phosphoserine. The a.T hook 9 DNA-binding region spans Arg-219–Ala-226. Positions Asn-237 to Gly-247 are enriched in acidic residues. Phosphoserine occurs at positions 246, 252, and 253. 2 consecutive DNA-binding regions (a.T hook) follow at residues Lys-262 to Leu-269 and Lys-281 to Lys-288. 2 positions are modified to phosphoserine: Ser-299 and Ser-307. Residues Ser-307–Val-318 show a composition bias toward basic and acidic residues. Ser-311 is subject to Phosphoserine; by CK2. Thr-321 is modified (phosphothreonine). A Phosphoserine; by CK2 modification is found at Ser-332. The span at Asp-345–Ala-355 shows a compositional bias: polar residues.

It is found in the nucleus. It localises to the chromosome. Its function is as follows. This satellite DNA-associated protein is a double-stranded DNA binding protein specific for tracts of pure at DNA. It may play a role in organizing the higher-order structure of euchromatin as well as heterochromatin. The protein is Chromosomal protein D1 (D1) of Drosophila melanogaster (Fruit fly).